Reading from the N-terminus, the 297-residue chain is ClpXP adapter protein SpxH (297 aa).

It belongs to the SpxH family. In terms of assembly, interacts with Spx.

It is found in the cytoplasm. Its function is as follows. Adapter protein required for efficient degradation of Spx by ClpXP under non-stress conditions. Interaction with Spx stabilizes Spx and exposes the C-terminus of Spx for recognition and proteolysis by ClpXP. This chain is ClpXP adapter protein SpxH, found in Bacillus cereus (strain ZK / E33L).